Reading from the N-terminus, the 75-residue chain is Small ribosomal subunit protein bS18 (75 aa).

Belongs to the bacterial ribosomal protein bS18 family. As to quaternary structure, part of the 30S ribosomal subunit. Forms a tight heterodimer with protein bS6.

Functionally, binds as a heterodimer with protein bS6 to the central domain of the 16S rRNA, where it helps stabilize the platform of the 30S subunit. This Sodalis glossinidius (strain morsitans) protein is Small ribosomal subunit protein bS18.